A 286-amino-acid polypeptide reads, in one-letter code: Bifunctional protein FolD (286 aa).

NADP(+)-binding positions include 166-168 (GQS), Ser-191, and Ile-232.

It belongs to the tetrahydrofolate dehydrogenase/cyclohydrolase family. As to quaternary structure, homodimer.

The enzyme catalyses (6R)-5,10-methylene-5,6,7,8-tetrahydrofolate + NADP(+) = (6R)-5,10-methenyltetrahydrofolate + NADPH. It carries out the reaction (6R)-5,10-methenyltetrahydrofolate + H2O = (6R)-10-formyltetrahydrofolate + H(+). Its pathway is one-carbon metabolism; tetrahydrofolate interconversion. In terms of biological role, catalyzes the oxidation of 5,10-methylenetetrahydrofolate to 5,10-methenyltetrahydrofolate and then the hydrolysis of 5,10-methenyltetrahydrofolate to 10-formyltetrahydrofolate. The sequence is that of Bifunctional protein FolD from Alkalilimnicola ehrlichii (strain ATCC BAA-1101 / DSM 17681 / MLHE-1).